The sequence spans 231 residues: 5'-methylthioadenosine/S-adenosylhomocysteine nucleosidase (231 aa).

The Proton acceptor role is filled by glutamate 12. Residues glycine 78, isoleucine 153, and 174 to 175 contribute to the substrate site; that span reads ME. The active-site Proton donor is aspartate 198.

This sequence belongs to the PNP/UDP phosphorylase family. MtnN subfamily.

The enzyme catalyses S-adenosyl-L-homocysteine + H2O = S-(5-deoxy-D-ribos-5-yl)-L-homocysteine + adenine. It catalyses the reaction S-methyl-5'-thioadenosine + H2O = 5-(methylsulfanyl)-D-ribose + adenine. The catalysed reaction is 5'-deoxyadenosine + H2O = 5-deoxy-D-ribose + adenine. The protein operates within amino-acid biosynthesis; L-methionine biosynthesis via salvage pathway; S-methyl-5-thio-alpha-D-ribose 1-phosphate from S-methyl-5'-thioadenosine (hydrolase route): step 1/2. Functionally, catalyzes the irreversible cleavage of the glycosidic bond in both 5'-methylthioadenosine (MTA) and S-adenosylhomocysteine (SAH/AdoHcy) to adenine and the corresponding thioribose, 5'-methylthioribose and S-ribosylhomocysteine, respectively. Also cleaves 5'-deoxyadenosine, a toxic by-product of radical S-adenosylmethionine (SAM) enzymes, into 5-deoxyribose and adenine. In Shewanella sp. (strain W3-18-1), this protein is 5'-methylthioadenosine/S-adenosylhomocysteine nucleosidase.